The sequence spans 306 residues: Pantothenate kinase (306 aa).

ATP is bound at residue 91-98 (GSVAVGKS).

The protein belongs to the prokaryotic pantothenate kinase family.

It localises to the cytoplasm. The catalysed reaction is (R)-pantothenate + ATP = (R)-4'-phosphopantothenate + ADP + H(+). It functions in the pathway cofactor biosynthesis; coenzyme A biosynthesis; CoA from (R)-pantothenate: step 1/5. The chain is Pantothenate kinase from Streptococcus agalactiae serotype Ia (strain ATCC 27591 / A909 / CDC SS700).